An 86-amino-acid polypeptide reads, in one-letter code: Small ribosomal subunit protein uS17 (86 aa).

Belongs to the universal ribosomal protein uS17 family. As to quaternary structure, part of the 30S ribosomal subunit.

One of the primary rRNA binding proteins, it binds specifically to the 5'-end of 16S ribosomal RNA. This Tropheryma whipplei (strain TW08/27) (Whipple's bacillus) protein is Small ribosomal subunit protein uS17.